A 640-amino-acid chain; its full sequence is Glycosyltransferase-like protein gnt14 (640 aa).

The Cytoplasmic segment spans residues 1–14; the sequence is MFGFKTTKNKKRVR. Residues 15–35 traverse the membrane as a helical; Signal-anchor for type II membrane protein segment; the sequence is LLVVAIGVMIFFMCLSNFSSI. Residues 36–640 are Extracellular-facing; that stretch reads QSRQSSSTDT…TENCYSNDHW (605 aa). 2 disordered regions span residues 63–184 and 254–277; these read PSIN…PLSS and NSNNNNNNNNNNNNNNNNNNNNNY. Positions 65 to 171 are enriched in low complexity; it reads ININNSENNI…NININNNNKP (107 aa). The N-linked (GlcNAc...) asparagine glycan is linked to N68. N-linked (GlcNAc...) asparagine glycans are attached at residues N410 and N539.

This sequence belongs to the glycosyltransferase 8 family. Highly divergent.

The protein resides in the membrane. This Dictyostelium discoideum (Social amoeba) protein is Glycosyltransferase-like protein gnt14 (gnt14).